The primary structure comprises 120 residues: UPF0295 protein Exig_0660 (120 aa).

2 helical membrane-spanning segments follow: residues 16–36 (AMFL…LKQF) and 41–61 (VILM…YFLI).

The protein belongs to the UPF0295 family.

It is found in the cell membrane. The sequence is that of UPF0295 protein Exig_0660 from Exiguobacterium sibiricum (strain DSM 17290 / CCUG 55495 / CIP 109462 / JCM 13490 / 255-15).